A 137-amino-acid chain; its full sequence is Cellular retinoic acid-binding protein 1 (137 aa).

Positions 21 to 31 (KALGVNAMLRK) match the Nuclear localization signal motif. 132-134 (RIY) provides a ligand contact to all-trans-retinoate.

Belongs to the calycin superfamily. Fatty-acid binding protein (FABP) family.

It localises to the cytoplasm. In terms of biological role, cytosolic CRABPs may regulate the access of retinoic acid to the nuclear retinoic acid receptors. In Homo sapiens (Human), this protein is Cellular retinoic acid-binding protein 1 (CRABP1).